Consider the following 89-residue polypeptide: Small ribosomal subunit protein uS15 (89 aa).

It belongs to the universal ribosomal protein uS15 family. Part of the 30S ribosomal subunit. Forms a bridge to the 50S subunit in the 70S ribosome, contacting the 23S rRNA.

One of the primary rRNA binding proteins, it binds directly to 16S rRNA where it helps nucleate assembly of the platform of the 30S subunit by binding and bridging several RNA helices of the 16S rRNA. Its function is as follows. Forms an intersubunit bridge (bridge B4) with the 23S rRNA of the 50S subunit in the ribosome. The chain is Small ribosomal subunit protein uS15 from Bifidobacterium adolescentis (strain ATCC 15703 / DSM 20083 / NCTC 11814 / E194a).